Reading from the N-terminus, the 312-residue chain is Olfactory receptor 1D2 (312 aa).

Residues 1–25 (MDGGNQSEGSEFLLLGMSESPEQQR) are Extracellular-facing. An N-linked (GlcNAc...) asparagine glycan is attached at asparagine 5. The helical transmembrane segment at 26-49 (ILFWMFLSMYLVTVVGNVLIILAI) threads the bilayer. Residues 50–57 (SSDSRLHT) lie on the Cytoplasmic side of the membrane. The helical transmembrane segment at 58–79 (PVYFFLANLSFTDLFFVTNTIP) threads the bilayer. Residues 80–100 (KMLVNLQSHNKAISYAGCLTQ) are Extracellular-facing. Cysteines 97 and 189 form a disulfide. A helical transmembrane segment spans residues 101-120 (LYFLVSLVALDNLILAVMAY). Over 121–139 (DRYVAICCPLHYTTAMSPK) the chain is Cytoplasmic. The chain crosses the membrane as a helical span at residues 140–158 (LCILLLSLCWVLSVLYGLI). Residues 159 to 196 (HTLLMTRVTFCGSRKIHYIFCEMYVLLRMACSNIQINH) are Extracellular-facing. An N-linked (GlcNAc...) asparagine glycan is attached at asparagine 195. Residues 197–219 (TVLIATGCFIFLIPFGFVIISYV) form a helical membrane-spanning segment. Over 220–236 (LIIRAILRIPSVSKKYK) the chain is Cytoplasmic. A helical transmembrane segment spans residues 237 to 259 (AFSTCASHLGAVSLFYGTLCMVY). The Extracellular segment spans residues 260–271 (LKPLHTYSVKDS). The chain crosses the membrane as a helical span at residues 272–291 (VATVMYAVVTPMMNPFIYSL). At 292–312 (RNKDMHGALGRLLDKHFKRLT) the chain is on the cytoplasmic side.

This sequence belongs to the G-protein coupled receptor 1 family. Expressed in testis. Expressed in spermatozoa (at protein level). Expressed in olfactory epithelium.

It localises to the cell membrane. Functionally, odorant receptor which may be involved in sperm chemotaxis. Bourgeonal is a strong chemoattractant for sperm in vitro and is shown to be a strong agonist for OR1D2 in vitro. May also function in olfactory reception. The chain is Olfactory receptor 1D2 (OR1D2) from Homo sapiens (Human).